The sequence spans 424 residues: 3-oxo-tetronate kinase (424 aa).

ATP is bound by residues Ser-264, 363-366 (GGET), and Gly-408.

The protein belongs to the four-carbon acid sugar kinase family.

It carries out the reaction 3-dehydro-L-erythronate + ATP = 3-dehydro-4-O-phospho-L-erythronate + ADP + H(+). The enzyme catalyses 3-dehydro-D-erythronate + ATP = 3-dehydro-4-O-phospho-D-erythronate + ADP + H(+). In terms of biological role, catalyzes the ATP-dependent phosphorylation of 3-oxo-tetronate to 3-oxo-tetronate 4-phosphate. This Methylobacterium radiotolerans (strain ATCC 27329 / DSM 1819 / JCM 2831 / NBRC 15690 / NCIMB 10815 / 0-1) protein is 3-oxo-tetronate kinase.